The sequence spans 355 residues: 1D-myo-inositol 2-acetamido-2-deoxy-alpha-D-glucopyranoside deacetylase 3 (355 aa).

Zn(2+) is bound by residues His-31, Asp-34, and His-169.

The protein belongs to the MshB deacetylase family. Zn(2+) is required as a cofactor.

The catalysed reaction is 1D-myo-inositol 2-acetamido-2-deoxy-alpha-D-glucopyranoside + H2O = 1D-myo-inositol 2-amino-2-deoxy-alpha-D-glucopyranoside + acetate. Catalyzes the deacetylation of 1D-myo-inositol 2-acetamido-2-deoxy-alpha-D-glucopyranoside (GlcNAc-Ins) in the mycothiol biosynthesis pathway. The sequence is that of 1D-myo-inositol 2-acetamido-2-deoxy-alpha-D-glucopyranoside deacetylase 3 from Catenulispora acidiphila (strain DSM 44928 / JCM 14897 / NBRC 102108 / NRRL B-24433 / ID139908).